Reading from the N-terminus, the 330-residue chain is Putative [LysW]-L-2-aminoadipate/[LysW]-L-glutamate phosphate reductase (330 aa).

NADP(+) contacts are provided by residues 10 to 13 (SGYI) and 34 to 36 (SRR). Cysteine 142 is a catalytic residue. Asparagine 297 contacts NADP(+).

It belongs to the NAGSA dehydrogenase family. Type 1 subfamily. LysY sub-subfamily.

It localises to the cytoplasm. The catalysed reaction is [amino-group carrier protein]-C-terminal-N-(1-carboxy-5-oxopentan-1-yl)-L-glutamine + phosphate + NADP(+) = [amino-group carrier protein]-C-terminal-N-(1-carboxy-5-phosphooxy-5-oxopentan-1-yl)-L-glutamine + NADPH + H(+). The enzyme catalyses [amino-group carrier protein]-C-terminal-gamma-(L-glutamyl-5-semialdehyde)-L-glutamate + phosphate + NADP(+) = [amino-group carrier protein]-C-terminal-gamma-(5-phospho-L-glutamyl)-L-glutamate + NADPH + H(+). It functions in the pathway amino-acid biosynthesis; L-lysine biosynthesis via AAA pathway; L-lysine from L-alpha-aminoadipate (Thermus route): step 3/5. Its pathway is amino-acid biosynthesis; L-arginine biosynthesis. Its function is as follows. Involved in both the arginine and lysine biosynthetic pathways. The chain is Putative [LysW]-L-2-aminoadipate/[LysW]-L-glutamate phosphate reductase from Thermococcus kodakarensis (strain ATCC BAA-918 / JCM 12380 / KOD1) (Pyrococcus kodakaraensis (strain KOD1)).